The sequence spans 360 residues: Photosystem II protein D1 (360 aa).

3 helical membrane passes run 30–47 (YVGW…AATT), 119–134 (HFLI…QWEL), and 143–157 (WICV…AAFA). His-119 lines the chlorophyll a pocket. Pheophytin a is bound at residue Tyr-127. Asp-171 and Glu-190 together coordinate [CaMn4O5] cluster. The chain crosses the membrane as a helical span at residues 198–219 (FHMAGVAGMFGGALFSAMHGSL). A chlorophyll a-binding site is contributed by His-199. A quinone-binding positions include His-216 and 265–266 (SF). Residue His-216 coordinates Fe cation. His-273 is a binding site for Fe cation. A helical transmembrane segment spans residues 275 to 289 (FLASWPVICVWLTSM). Residues His-333, Glu-334, Asp-343, and Ala-345 each contribute to the [CaMn4O5] cluster site. Residues 346-360 (AAESTSVALVAPAIG) constitute a propeptide that is removed on maturation.

Belongs to the reaction center PufL/M/PsbA/D family. PSII is composed of 1 copy each of membrane proteins PsbA, PsbB, PsbC, PsbD, PsbE, PsbF, PsbH, PsbI, PsbJ, PsbK, PsbL, PsbM, PsbT, PsbX, PsbY, Psb30/Ycf12, peripheral proteins PsbO, CyanoQ (PsbQ), PsbU, PsbV and a large number of cofactors. It forms dimeric complexes. The cofactor is The D1/D2 heterodimer binds P680, chlorophylls that are the primary electron donor of PSII, and subsequent electron acceptors. It shares a non-heme iron and each subunit binds pheophytin, quinone, additional chlorophylls, carotenoids and lipids. D1 provides most of the ligands for the Mn4-Ca-O5 cluster of the oxygen-evolving complex (OEC). There is also a Cl(-1) ion associated with D1 and D2, which is required for oxygen evolution. The PSII complex binds additional chlorophylls, carotenoids and specific lipids.. Tyr-162 forms a radical intermediate that is referred to as redox-active TyrZ, YZ or Y-Z. In terms of processing, C-terminally processed by CtpA; processing is essential to allow assembly of the oxygen-evolving complex and thus photosynthetic growth.

It localises to the cellular thylakoid membrane. It catalyses the reaction 2 a plastoquinone + 4 hnu + 2 H2O = 2 a plastoquinol + O2. Photosystem II (PSII) is a light-driven water:plastoquinone oxidoreductase that uses light energy to abstract electrons from H(2)O, generating O(2) and a proton gradient subsequently used for ATP formation. It consists of a core antenna complex that captures photons, and an electron transfer chain that converts photonic excitation into a charge separation. The D1/D2 (PsbA/PsbD) reaction center heterodimer binds P680, the primary electron donor of PSII as well as several subsequent electron acceptors. This is Photosystem II protein D1 from Prochlorococcus marinus (strain NATL1A).